Here is a 555-residue protein sequence, read N- to C-terminus: (+)-delta-cadinene synthase isozyme A (555 aa).

Residues 1–22 (MASQASQVLASPHPAISSENRP) are disordered. Mg(2+) contacts are provided by Asp-308, Asp-312, Asp-452, and Glu-456. Residues 308 to 312 (DDTYD) carry the DDXXD motif motif.

The protein belongs to the terpene synthase family. Mg(2+) is required as a cofactor.

It carries out the reaction (2E,6E)-farnesyl diphosphate = (1S,8aR)-delta-cadinene + diphosphate. The protein operates within secondary metabolite biosynthesis; terpenoid biosynthesis. In terms of biological role, responsible for the cyclization of trans,trans-farnesyl diphosphate (FPP) to (+)-delta cadinene. This chain is (+)-delta-cadinene synthase isozyme A (CAD1-A), found in Gossypium arboreum (Tree cotton).